Consider the following 288-residue polypeptide: dTDP-4-keto-6-deoxy-D-glucose reductase (288 aa).

Residues 12–14, 38–39, 62–64, Y127, and K131 contribute to the NADH site; these read GML, DI, and AWT. Residues 13 to 14, 38 to 39, 62 to 64, Y127, and K131 contribute to the NADPH site; these read ML, DI, and AWT. The active-site Proton donor/acceptor is Y127.

The protein belongs to the dTDP-4-dehydrorhamnose reductase family. It depends on Mg(2+) as a cofactor.

The protein operates within antibiotic biosynthesis; novobiocin biosynthesis. Reduces the product formed from the reaction of NovW with dTDP-4-keto-6-deoxy-D-glucose to result in dTDP-5-methyl-L-rhamnose in the novobiocin biosynthesis pathway, an aminocoumarin family antibiotic that targets bacterial DNA gyrases. This is dTDP-4-keto-6-deoxy-D-glucose reductase (novS) from Streptomyces niveus (Streptomyces spheroides).